A 244-amino-acid chain; its full sequence is Carbonic anhydrase (244 aa).

Positions 1-19 are cleaved as a signal peptide; sequence MKGKLSIALMLSVCFSASA. The Alpha-carbonic anhydrase domain occupies 23–244; sequence VHWGYEGNGD…QPLNGRIIIH (222 aa). Cys-46 and Cys-199 are disulfide-bonded. His-84 acts as the Proton acceptor in catalysis. Residues His-109, His-111, and His-128 each contribute to the Zn(2+) site. 195 to 196 contributes to the substrate binding site; sequence TT.

The protein belongs to the alpha-carbonic anhydrase family. The cofactor is Zn(2+).

The protein resides in the periplasm. It catalyses the reaction hydrogencarbonate + H(+) = CO2 + H2O. Reversible hydration of carbon dioxide. In Pectobacterium carotovorum (Erwinia carotovora), this protein is Carbonic anhydrase (cah).